A 688-amino-acid chain; its full sequence is ERI1 exoribonuclease 2 (688 aa).

An Exonuclease domain is found at 37–226; that stretch reads LIVVDFESTC…DDSRNTALLA (190 aa). Residues Asp-41, Glu-43, and Asp-156 each contribute to the Mg(2+) site. Glu-43 (proton acceptor) is an active-site residue. Position 43 (Glu-43) interacts with AMP. The active-site Proton acceptor is the His-213. His-213 contacts AMP. Asp-218 provides a ligand contact to Mg(2+). Over residues 337–360 the composition is skewed to polar residues; the sequence is VDQLHSPTLNPPLTMQKPSKSDQL. Disordered stretches follow at residues 337–367 and 523–546; these read VDQL…DSSK and DPLL…TKRQ. Zn(2+) contacts are provided by Cys-594, Cys-596, Cys-619, and Cys-631. The GRF-type zinc-finger motif lies at 594–640; it reads CKCGRRSKRLIVSNNGPNHGKAFYCCPVGKYQQDRKCCGYFKWEQTL.

It belongs to the ERI2 family. Requires Mg(2+) as cofactor.

This Mus musculus (Mouse) protein is ERI1 exoribonuclease 2 (Eri2).